Reading from the N-terminus, the 185-residue chain is Ribosome-recycling factor (185 aa).

The protein belongs to the RRF family.

It localises to the cytoplasm. Functionally, responsible for the release of ribosomes from messenger RNA at the termination of protein biosynthesis. May increase the efficiency of translation by recycling ribosomes from one round of translation to another. In Halalkalibacterium halodurans (strain ATCC BAA-125 / DSM 18197 / FERM 7344 / JCM 9153 / C-125) (Bacillus halodurans), this protein is Ribosome-recycling factor.